Consider the following 394-residue polypeptide: 1-deoxy-D-xylulose 5-phosphate reductoisomerase (394 aa).

Positions 28, 29, 30, 31, 57, and 133 each coordinate NADPH. A 1-deoxy-D-xylulose 5-phosphate-binding site is contributed by Lys134. Glu135 is an NADPH binding site. Asp157 serves as a coordination point for Mn(2+). Positions 158, 159, 183, and 206 each coordinate 1-deoxy-D-xylulose 5-phosphate. Glu159 is a Mn(2+) binding site. Residue Gly212 participates in NADPH binding. 1-deoxy-D-xylulose 5-phosphate is bound by residues Ser219, Asn224, Lys225, and Glu228. Mn(2+) is bound at residue Glu228.

Belongs to the DXR family. Mg(2+) serves as cofactor. The cofactor is Mn(2+).

It carries out the reaction 2-C-methyl-D-erythritol 4-phosphate + NADP(+) = 1-deoxy-D-xylulose 5-phosphate + NADPH + H(+). The protein operates within isoprenoid biosynthesis; isopentenyl diphosphate biosynthesis via DXP pathway; isopentenyl diphosphate from 1-deoxy-D-xylulose 5-phosphate: step 1/6. Functionally, catalyzes the NADPH-dependent rearrangement and reduction of 1-deoxy-D-xylulose-5-phosphate (DXP) to 2-C-methyl-D-erythritol 4-phosphate (MEP). In Nocardia farcinica (strain IFM 10152), this protein is 1-deoxy-D-xylulose 5-phosphate reductoisomerase.